A 261-amino-acid chain; its full sequence is DNA repair protein RecO (261 aa).

Belongs to the RecO family.

In terms of biological role, involved in DNA repair and RecF pathway recombination. The chain is DNA repair protein RecO from Chlorobium limicola (strain DSM 245 / NBRC 103803 / 6330).